A 408-amino-acid polypeptide reads, in one-letter code: Imidazolonepropionase (408 aa).

Fe(3+)-binding residues include His73 and His75. Zn(2+)-binding residues include His73 and His75. Residues Arg82, Tyr145, and His178 each contribute to the 4-imidazolone-5-propanoate site. Tyr145 is an N-formimidoyl-L-glutamate binding site. His243 serves as a coordination point for Fe(3+). Zn(2+) is bound at residue His243. Gln246 contributes to the 4-imidazolone-5-propanoate binding site. Residue Asp318 coordinates Fe(3+). A Zn(2+)-binding site is contributed by Asp318. N-formimidoyl-L-glutamate-binding residues include Asn320 and Gly322. Ser323 serves as a coordination point for 4-imidazolone-5-propanoate.

It belongs to the metallo-dependent hydrolases superfamily. HutI family. The cofactor is Zn(2+). Fe(3+) is required as a cofactor.

The protein resides in the cytoplasm. It catalyses the reaction 4-imidazolone-5-propanoate + H2O = N-formimidoyl-L-glutamate. The protein operates within amino-acid degradation; L-histidine degradation into L-glutamate; N-formimidoyl-L-glutamate from L-histidine: step 3/3. Functionally, catalyzes the hydrolytic cleavage of the carbon-nitrogen bond in imidazolone-5-propanoate to yield N-formimidoyl-L-glutamate. It is the third step in the universal histidine degradation pathway. This Shewanella sp. (strain ANA-3) protein is Imidazolonepropionase.